A 125-amino-acid chain; its full sequence is NADPH-dependent 7-cyano-7-deazaguanine reductase (125 aa).

The Thioimide intermediate role is filled by Cys-41. Asp-48 serves as the catalytic Proton donor. Substrate is bound by residues Ile-63–Leu-65 and His-82–Glu-83.

The protein belongs to the GTP cyclohydrolase I family. QueF type 1 subfamily.

Its subcellular location is the cytoplasm. The enzyme catalyses 7-aminomethyl-7-carbaguanine + 2 NADP(+) = 7-cyano-7-deazaguanine + 2 NADPH + 3 H(+). It participates in tRNA modification; tRNA-queuosine biosynthesis. Catalyzes the NADPH-dependent reduction of 7-cyano-7-deazaguanine (preQ0) to 7-aminomethyl-7-deazaguanine (preQ1). The sequence is that of NADPH-dependent 7-cyano-7-deazaguanine reductase from Sulfurovum sp. (strain NBC37-1).